We begin with the raw amino-acid sequence, 486 residues long: Kynurenine 3-monooxygenase (486 aa).

FAD contacts are provided by residues Val-19, 37 to 40 (YEAR), and Ala-57. 2 residues coordinate L-kynurenine: Arg-85 and Tyr-99. Residues Arg-111, Leu-136, Thr-172, Asp-304, and 317–318 (MN) each bind FAD. The L-kynurenine site is built by Asn-363 and Tyr-398. The next 2 membrane-spanning stretches (helical) occupy residues 385–404 (FLHA…VTFS) and 425–445 (GLFF…IHYM). An N-linked (GlcNAc...) asparagine glycan is attached at Asn-465.

It belongs to the aromatic-ring hydroxylase family. KMO subfamily. FAD serves as cofactor. In terms of tissue distribution, highest levels in placenta and liver. Detectable in kidney.

It localises to the mitochondrion outer membrane. It catalyses the reaction L-kynurenine + NADPH + O2 + H(+) = 3-hydroxy-L-kynurenine + NADP(+) + H2O. Its pathway is cofactor biosynthesis; NAD(+) biosynthesis; quinolinate from L-kynurenine: step 1/3. Functionally, catalyzes the hydroxylation of L-kynurenine (L-Kyn) to form 3-hydroxy-L-kynurenine (L-3OHKyn). Required for synthesis of quinolinic acid, a neurotoxic NMDA receptor antagonist and potential endogenous inhibitor of NMDA receptor signaling in axonal targeting, synaptogenesis and apoptosis during brain development. Quinolinic acid may also affect NMDA receptor signaling in pancreatic beta cells, osteoblasts, myocardial cells, and the gastrointestinal tract. The chain is Kynurenine 3-monooxygenase from Homo sapiens (Human).